A 155-amino-acid chain; its full sequence is Small ribosomal subunit protein uS7cz/uS7cy (155 aa).

Belongs to the universal ribosomal protein uS7 family. As to quaternary structure, part of the 30S ribosomal subunit.

It localises to the plastid. It is found in the chloroplast. In terms of biological role, one of the primary rRNA binding proteins, it binds directly to 16S rRNA where it nucleates assembly of the head domain of the 30S subunit. This Lemna minor (Common duckweed) protein is Small ribosomal subunit protein uS7cz/uS7cy (rps7-A).